The primary structure comprises 173 residues: Crossover junction endodeoxyribonuclease RuvC (173 aa).

Active-site residues include aspartate 8, glutamate 67, and aspartate 139. The Mg(2+) site is built by aspartate 8, glutamate 67, and aspartate 139.

It belongs to the RuvC family. In terms of assembly, homodimer which binds Holliday junction (HJ) DNA. The HJ becomes 2-fold symmetrical on binding to RuvC with unstacked arms; it has a different conformation from HJ DNA in complex with RuvA. In the full resolvosome a probable DNA-RuvA(4)-RuvB(12)-RuvC(2) complex forms which resolves the HJ. Mg(2+) is required as a cofactor.

The protein localises to the cytoplasm. The catalysed reaction is Endonucleolytic cleavage at a junction such as a reciprocal single-stranded crossover between two homologous DNA duplexes (Holliday junction).. In terms of biological role, the RuvA-RuvB-RuvC complex processes Holliday junction (HJ) DNA during genetic recombination and DNA repair. Endonuclease that resolves HJ intermediates. Cleaves cruciform DNA by making single-stranded nicks across the HJ at symmetrical positions within the homologous arms, yielding a 5'-phosphate and a 3'-hydroxyl group; requires a central core of homology in the junction. The consensus cleavage sequence is 5'-(A/T)TT(C/G)-3'. Cleavage occurs on the 3'-side of the TT dinucleotide at the point of strand exchange. HJ branch migration catalyzed by RuvA-RuvB allows RuvC to scan DNA until it finds its consensus sequence, where it cleaves and resolves the cruciform DNA. The polypeptide is Crossover junction endodeoxyribonuclease RuvC (Salmonella choleraesuis (strain SC-B67)).